The primary structure comprises 225 residues: Superoxide dismutase [Mn], mitochondrial (225 aa).

A mitochondrion-targeting transit peptide spans 1–27; it reads MITAITRTALPRATLRTSLATMSTIRA. Mn(2+) is bound by residues His53, His101, Asp187, and His191.

Belongs to the iron/manganese superoxide dismutase family. Mn(2+) serves as cofactor.

The protein resides in the mitochondrion. It is found in the cytoplasm. It carries out the reaction 2 superoxide + 2 H(+) = H2O2 + O2. In terms of biological role, destroys radicals which are normally produced within the cells and which are toxic to biological systems. Destroys mitochondrial radicals produced by oxidative stress. Its function is as follows. Destroys cytoplasmic radicals produced in low copper environments; a condition which inactivates the cytoplasmic copper-dependent superoxide dismutase SOD1. The sequence is that of Superoxide dismutase [Mn], mitochondrial from Cryptococcus neoformans var. grubii serotype A (strain H99 / ATCC 208821 / CBS 10515 / FGSC 9487) (Filobasidiella neoformans var. grubii).